Consider the following 95-residue polypeptide: MTKSELIEKLATRQSQLSAKEVESAIKEMLEQMATTLESGDRIEIRGFGSFSLHYRAPRTGRNPKTGSSVELEGKYVPHFKPGKELRERVDAVNV.

It belongs to the bacterial histone-like protein family. In terms of assembly, heterodimer of an alpha and a beta chain.

This protein is one of the two subunits of integration host factor, a specific DNA-binding protein that functions in genetic recombination as well as in transcriptional and translational control. The chain is Integration host factor subunit beta from Shewanella putrefaciens (strain CN-32 / ATCC BAA-453).